The following is a 262-amino-acid chain: Ribosomal RNA small subunit methyltransferase A (262 aa).

6 residues coordinate S-adenosyl-L-methionine: histidine 16, leucine 18, glycine 43, glutamate 64, aspartate 89, and asparagine 109.

Belongs to the class I-like SAM-binding methyltransferase superfamily. rRNA adenine N(6)-methyltransferase family. RsmA subfamily.

It is found in the cytoplasm. The enzyme catalyses adenosine(1518)/adenosine(1519) in 16S rRNA + 4 S-adenosyl-L-methionine = N(6)-dimethyladenosine(1518)/N(6)-dimethyladenosine(1519) in 16S rRNA + 4 S-adenosyl-L-homocysteine + 4 H(+). Its function is as follows. Specifically dimethylates two adjacent adenosines (A1518 and A1519) in the loop of a conserved hairpin near the 3'-end of 16S rRNA in the 30S particle. May play a critical role in biogenesis of 30S subunits. The protein is Ribosomal RNA small subunit methyltransferase A of Xanthomonas campestris pv. campestris (strain B100).